Reading from the N-terminus, the 201-residue chain is UPF0301 protein RHE_CH00966 (201 aa).

Belongs to the UPF0301 (AlgH) family.

This Rhizobium etli (strain ATCC 51251 / DSM 11541 / JCM 21823 / NBRC 15573 / CFN 42) protein is UPF0301 protein RHE_CH00966.